The following is a 386-amino-acid chain: NADH-ubiquinone oxidoreductase chain 4 (386 aa).

Transmembrane regions (helical) follow at residues 8–28 (SEFH…YFLF), 37–57 (WPLS…LTFT), 61–81 (FILF…LILG), 91–111 (ASYY…FIII), 133–153 (IFLL…AHIW), 167–187 (MVLA…VQVL), 189–209 (IYSE…SCLI), 219–239 (LIAY…LMSC), 247–267 (ILMM…SYLF), 283–303 (ISLF…NMGL), and 315–335 (FFIG…ILCF).

It belongs to the complex I subunit 4 family.

The protein resides in the mitochondrion membrane. The enzyme catalyses a ubiquinone + NADH + 5 H(+)(in) = a ubiquinol + NAD(+) + 4 H(+)(out). Its function is as follows. Core subunit of the mitochondrial membrane respiratory chain NADH dehydrogenase (Complex I) that is believed to belong to the minimal assembly required for catalysis. Complex I functions in the transfer of electrons from NADH to the respiratory chain. The immediate electron acceptor for the enzyme is believed to be ubiquinone. This is NADH-ubiquinone oxidoreductase chain 4 (ND4) from Artemia franciscana (Brine shrimp).